We begin with the raw amino-acid sequence, 265 residues long: Thymidylate synthase (265 aa).

Residue Arg-21 participates in dUMP binding. A (6R)-5,10-methylene-5,6,7,8-tetrahydrofolate-binding site is contributed by His-51. 127 to 128 (RR) is a binding site for dUMP. Residue Cys-147 is the Nucleophile of the active site. DUMP is bound by residues 167-170 (RSAD), Asn-178, and 208-210 (HLY). A (6R)-5,10-methylene-5,6,7,8-tetrahydrofolate-binding site is contributed by Asp-170. A (6R)-5,10-methylene-5,6,7,8-tetrahydrofolate-binding site is contributed by Ser-264.

Belongs to the thymidylate synthase family. Bacterial-type ThyA subfamily. In terms of assembly, homodimer.

The protein resides in the cytoplasm. It catalyses the reaction dUMP + (6R)-5,10-methylene-5,6,7,8-tetrahydrofolate = 7,8-dihydrofolate + dTMP. The protein operates within pyrimidine metabolism; dTTP biosynthesis. Functionally, catalyzes the reductive methylation of 2'-deoxyuridine-5'-monophosphate (dUMP) to 2'-deoxythymidine-5'-monophosphate (dTMP) while utilizing 5,10-methylenetetrahydrofolate (mTHF) as the methyl donor and reductant in the reaction, yielding dihydrofolate (DHF) as a by-product. This enzymatic reaction provides an intracellular de novo source of dTMP, an essential precursor for DNA biosynthesis. The chain is Thymidylate synthase from Neisseria gonorrhoeae.